Reading from the N-terminus, the 282-residue chain is tRNA (guanine-N(1)-)-methyltransferase (282 aa).

Residue 145 to 150 participates in S-adenosyl-L-methionine binding; the sequence is IGDYVL.

This sequence belongs to the RNA methyltransferase TrmD family. In terms of assembly, homodimer.

It localises to the cytoplasm. It carries out the reaction guanosine(37) in tRNA + S-adenosyl-L-methionine = N(1)-methylguanosine(37) in tRNA + S-adenosyl-L-homocysteine + H(+). Functionally, specifically methylates guanosine-37 in various tRNAs. The chain is tRNA (guanine-N(1)-)-methyltransferase from Streptomyces avermitilis (strain ATCC 31267 / DSM 46492 / JCM 5070 / NBRC 14893 / NCIMB 12804 / NRRL 8165 / MA-4680).